Reading from the N-terminus, the 131-residue chain is Small ribosomal subunit protein bS6 (131 aa).

Residues 96–131 (VTAPSPMMKEEKSKSLLAKDEAAAPAPAPATEQATA) form a disordered region. Residues 103–117 (MKEEKSKSLLAKDEA) show a composition bias toward basic and acidic residues. A compositionally biased stretch (low complexity) spans 118-131 (AAPAPAPATEQATA).

Belongs to the bacterial ribosomal protein bS6 family.

Binds together with bS18 to 16S ribosomal RNA. The protein is Small ribosomal subunit protein bS6 of Methylobacillus flagellatus (strain ATCC 51484 / DSM 6875 / VKM B-1610 / KT).